The following is a 508-amino-acid chain: Bestrophin-2 (508 aa).

Topologically, residues 1 to 31 (MTVTYTARVANARFGGFSQLLLLWRGSIYKL) are cytoplasmic. A10 is a Ca(2+) binding site. The chain crosses the membrane as a helical span at residues 32–51 (LWRELLCFLGLYMALSAAYR). Over 52–60 (FLLAEEQKR) the chain is Extracellular. Residues 61 to 82 (YFEKLVIYCDQYASLIPVSFVL) traverse the membrane as a helical segment. Over 83-238 (GFYVTLVVHR…WISIPLVYTQ (156 aa)) the chain is Cytoplasmic. Residues 239 to 255 (VVTIAVYSYFLACLIGR) traverse the membrane as a helical segment. The Extracellular portion of the chain corresponds to 256–274 (QFLDPAQGYKDHTLDLCVP). A helical transmembrane segment spans residues 275-288 (IFTLLQFFFYAGWL). Over 289–508 (KVAEQLINPF…PIGEEEESPA (220 aa)) the chain is Cytoplasmic. Q293, N296, D301, and D304 together coordinate Ca(2+). The tract at residues 455 to 508 (LREPELEPPACPEPPAPIPGPTPEPFTTVSIPGPRAPAPPWLPSPIGEEEESPA) is disordered. 2 stretches are compositionally biased toward pro residues: residues 461–478 (EPPA…PTPE) and 488–497 (PRAPAPPWLP).

The protein belongs to the anion channel-forming bestrophin (TC 1.A.46) family. Calcium-sensitive chloride channel subfamily. In terms of assembly, pentamer. Interacts with GLUL; this interaction tethers a fraction of GLUL to the membrane, causing a decrease of cytosolic glutamine synthase (GS) activity and inhibits the chloride channel activity of BEST2 by affecting the gating at the aperture in the absence of intracellular glutamate. In terms of tissue distribution, expressed in mucin-secreting colonic goblet cells.

Its subcellular location is the cell membrane. It is found in the basolateral cell membrane. It catalyses the reaction chloride(in) = chloride(out). It carries out the reaction hydrogencarbonate(in) = hydrogencarbonate(out). The catalysed reaction is L-glutamate(out) = L-glutamate(in). The enzyme catalyses iodide(out) = iodide(in). It catalyses the reaction L-glutamine(out) = L-glutamine(in). With respect to regulation, chloride channel activity is allosterically inhibited by GLUL/glutamine synthase (GS) which affects the gating at the aperture in the absence of intracellular glutamate. Inhibitory effect of GLUL is relieved upon increasing of intracellular level of L-glutamate. Its function is as follows. Ligand-gated anion channel that allows the movement of anions across cell membranes when activated by calcium (Ca2+). Transports a large specter of anions, namely mediates the movement of chloride, L-glutamate and iodide. Calcium-binding triggers the dilation of the aperture, but calcium-dependent gating is only effective when the size of the passing anion is bigger than the closed aperture. Mediates the calcium-activated hydrogencarbonate movement and participates in colonic hydrogencarbonate secretion concomitant with mucin secretion. In non-pigmented epithelium (NPE), mediates the efflux of intracellular L-glutamate; binding of intracellular L-glutamate activates and open both the neck and the aperture of the channel, leading to L-glutamate exit promoting chloride influx movement from the extracellular side in trans. Also exhibits a directional permeability for intracellular glutamine, in a similar manner as for L-glutamate. In Mus musculus (Mouse), this protein is Bestrophin-2.